Reading from the N-terminus, the 324-residue chain is Calmodulin-like protein 12 (324 aa).

EF-hand domains lie at 8–43 (DQIT…IGEK), 44–79 (PTKA…NQGH), 97–132 (DQIT…LGKN), 133–168 (RTKA…NQGH), 187–222 (DQIL…LGET), and 223–258 (QTKA…KMID). The Ca(2+) site is built by Asp-21, Asn-23, Asp-25, Ser-27, Glu-32, Asp-57, Asp-59, Asp-61, Thr-63, Glu-68, Asp-110, Asn-112, Asp-114, Ser-116, Glu-121, Asp-146, Asp-148, Asp-150, Thr-152, Glu-157, Asp-200, Asn-202, Asp-204, Tyr-206, Glu-211, Asp-236, Asp-238, Asp-240, Thr-242, and Glu-247.

Belongs to the calmodulin family. Interacts with PID. Binds to ABCG36.

Potential calcium sensor that binds calcium in vitro. This chain is Calmodulin-like protein 12, found in Arabidopsis thaliana (Mouse-ear cress).